We begin with the raw amino-acid sequence, 277 residues long: Ubiquinone biosynthesis protein COQ4, mitochondrial (277 aa).

The N-terminal 14 residues, 1-14 (MLTKRALRTTDPYR), are a transit peptide targeting the mitochondrion. The Zn(2+) site is built by H157, D158, H161, and E173.

This sequence belongs to the COQ4 family. As to quaternary structure, component of a multi-subunit COQ enzyme complex, composed of at least COQ3, COQ4, COQ5, COQ6, COQ7 and COQ9. It depends on Zn(2+) as a cofactor.

It localises to the mitochondrion inner membrane. It catalyses the reaction a 4-hydroxy-3-methoxy-5-(all-trans-polyprenyl)benzoate + H(+) = a 2-methoxy-6-(all-trans-polyprenyl)phenol + CO2. The protein operates within cofactor biosynthesis; ubiquinone biosynthesis. In terms of biological role, lyase that catalyzes the C1-decarboxylation of 4-hydroxy-3-methoxy-5-(all-trans-polyprenyl)benzoic acid into 2-methoxy-6-(all-trans-polyprenyl)phenol during ubiquinone biosynthesis. The chain is Ubiquinone biosynthesis protein COQ4, mitochondrial from Ajellomyces capsulatus (strain NAm1 / WU24) (Darling's disease fungus).